Reading from the N-terminus, the 161-residue chain is Transcription elongation factor GreA (161 aa).

This sequence belongs to the GreA/GreB family.

Necessary for efficient RNA polymerase transcription elongation past template-encoded arresting sites. The arresting sites in DNA have the property of trapping a certain fraction of elongating RNA polymerases that pass through, resulting in locked ternary complexes. Cleavage of the nascent transcript by cleavage factors such as GreA or GreB allows the resumption of elongation from the new 3'terminus. GreA releases sequences of 2 to 3 nucleotides. This is Transcription elongation factor GreA from Desulfotalea psychrophila (strain LSv54 / DSM 12343).